A 581-amino-acid polypeptide reads, in one-letter code: Proline--tRNA ligase (581 aa).

It belongs to the class-II aminoacyl-tRNA synthetase family. ProS type 1 subfamily. In terms of assembly, homodimer.

The protein resides in the cytoplasm. The catalysed reaction is tRNA(Pro) + L-proline + ATP = L-prolyl-tRNA(Pro) + AMP + diphosphate. Its function is as follows. Catalyzes the attachment of proline to tRNA(Pro) in a two-step reaction: proline is first activated by ATP to form Pro-AMP and then transferred to the acceptor end of tRNA(Pro). As ProRS can inadvertently accommodate and process non-cognate amino acids such as alanine and cysteine, to avoid such errors it has two additional distinct editing activities against alanine. One activity is designated as 'pretransfer' editing and involves the tRNA(Pro)-independent hydrolysis of activated Ala-AMP. The other activity is designated 'posttransfer' editing and involves deacylation of mischarged Ala-tRNA(Pro). The misacylated Cys-tRNA(Pro) is not edited by ProRS. The protein is Proline--tRNA ligase of Verminephrobacter eiseniae (strain EF01-2).